The chain runs to 172 residues: Large ribosomal subunit protein uL10 (172 aa).

This sequence belongs to the universal ribosomal protein uL10 family. Part of the ribosomal stalk of the 50S ribosomal subunit. The N-terminus interacts with L11 and the large rRNA to form the base of the stalk. The C-terminus forms an elongated spine to which L12 dimers bind in a sequential fashion forming a multimeric L10(L12)X complex.

Functionally, forms part of the ribosomal stalk, playing a central role in the interaction of the ribosome with GTP-bound translation factors. The sequence is that of Large ribosomal subunit protein uL10 from Caulobacter sp. (strain K31).